The following is a 747-amino-acid chain: Tripartite terminase subunit 3 (747 aa).

A Nuclear localization signal motif is present at residues 194-198; that stretch reads KRAKV. Residues 267 to 274 carry the Walker A motif motif; sequence VPRRHGKT. A Walker B motif motif is present at residues 361–366; that stretch reads LLFVDE. The active-site For ATPase activity is Glu-366. Residues Asp-521, Glu-593, and Asp-722 each act as for nuclease activity in the active site.

The protein belongs to the herpesviridae TRM3 protein family. Interacts with the terminase subunits TRM1 and TRM2. Interacts with portal protein.

Its subcellular location is the host nucleus. Functionally, component of the molecular motor that translocates viral genomic DNA in empty capsid during DNA packaging. Forms a tripartite terminase complex together with TRM1 and TRM2 in the host cytoplasm. Once the complex reaches the host nucleus, it interacts with the capsid portal vertex. This portal forms a ring in which genomic DNA is translocated into the capsid. TRM3 carries an RNase H-like nuclease activity that plays an important role for the cleavage of concatemeric viral DNA into unit length genomes. This Homo sapiens (Human) protein is Tripartite terminase subunit 3.